The sequence spans 37 residues: Cytochrome b6-f complex subunit 5 (37 aa).

A helical membrane pass occupies residues 5–25; the sequence is LLCGIVLGLVPVTIAGLFVTA.

Belongs to the PetG family. The 4 large subunits of the cytochrome b6-f complex are cytochrome b6, subunit IV (17 kDa polypeptide, PetD), cytochrome f and the Rieske protein, while the 4 small subunits are PetG, PetL, PetM and PetN. The complex functions as a dimer.

The protein localises to the plastid. It localises to the chloroplast thylakoid membrane. Component of the cytochrome b6-f complex, which mediates electron transfer between photosystem II (PSII) and photosystem I (PSI), cyclic electron flow around PSI, and state transitions. PetG is required for either the stability or assembly of the cytochrome b6-f complex. This chain is Cytochrome b6-f complex subunit 5, found in Chlamydomonas reinhardtii (Chlamydomonas smithii).